The following is a 201-amino-acid chain: MSYELPALPFDYTALAPYITKETLEFHHDKHHAAYVNNYNNAVKDTDLDGQPIEAVIKAIAGDASKAGLFNNAAQAWNHSFYWNSIKPNGGGAPTGALADKIAADFGSFENFVTEFKQAAATQFGSGWAWLVLDNGTLKITKTGNADTPIAHGQTPLLTIDVWEHAYYLDYQNRRPDYISTFVEKLANWDFASANYAAAIA.

Positions 27, 79, 161, and 165 each coordinate Fe cation.

Belongs to the iron/manganese superoxide dismutase family. As to quaternary structure, homodimer. Fe cation serves as cofactor.

It catalyses the reaction 2 superoxide + 2 H(+) = H2O2 + O2. Functionally, destroys superoxide anion radicals which are normally produced within the cells and which are toxic to biological systems. In Synechococcus elongatus (strain ATCC 33912 / PCC 7942 / FACHB-805) (Anacystis nidulans R2), this protein is Superoxide dismutase [Fe] (sodB).